A 223-amino-acid polypeptide reads, in one-letter code: Ribonuclease T (223 aa).

Positions 20-195 (VVIDVETAGF…YDTERTAELF (176 aa)) constitute an Exonuclease domain. Mg(2+) is bound by residues Asp23, Glu25, His182, and Asp187. His182 acts as the Proton donor/acceptor in catalysis.

The protein belongs to the RNase T family. As to quaternary structure, homodimer. Mg(2+) is required as a cofactor.

Functionally, trims short 3' overhangs of a variety of RNA species, leaving a one or two nucleotide 3' overhang. Responsible for the end-turnover of tRNA: specifically removes the terminal AMP residue from uncharged tRNA (tRNA-C-C-A). Also appears to be involved in tRNA biosynthesis. This is Ribonuclease T from Photobacterium profundum (strain SS9).